The chain runs to 306 residues: tRNA dimethylallyltransferase (306 aa).

9–16 (GPTGIGKT) is an ATP binding site. Residue 11–16 (TGIGKT) participates in substrate binding. The segment at 34–37 (DSMQ) is interaction with substrate tRNA.

The protein belongs to the IPP transferase family. In terms of assembly, monomer. Requires Mg(2+) as cofactor.

It catalyses the reaction adenosine(37) in tRNA + dimethylallyl diphosphate = N(6)-dimethylallyladenosine(37) in tRNA + diphosphate. Its function is as follows. Catalyzes the transfer of a dimethylallyl group onto the adenine at position 37 in tRNAs that read codons beginning with uridine, leading to the formation of N6-(dimethylallyl)adenosine (i(6)A). In Lactobacillus johnsonii (strain CNCM I-12250 / La1 / NCC 533), this protein is tRNA dimethylallyltransferase.